Reading from the N-terminus, the 46-residue chain is Short transmembrane mitochondrial protein 1 (46 aa).

A helical membrane pass occupies residues 7-23 (GFTLGNVVGMYLAQNYE).

It belongs to the STMP1 family. Widely expressed. Expressed more abundantly in brain compared with other tissues such as heart, muscle and liver.

It is found in the mitochondrion inner membrane. The protein localises to the mitochondrion outer membrane. It localises to the mitochondrion intermembrane space. In terms of biological role, microprotein involved in mitochondrial respiratory chain complex III (ubiquinol-cytochrome c oxidoreductase) and complex IV (mitochondrial cytochrome c oxidase complex) assembly. Required for the formation of mitochondrial supercomplexes (SCs). Also required for the activation of the NLRP3 inflammasome. The chain is Short transmembrane mitochondrial protein 1 from Danio rerio (Zebrafish).